A 160-amino-acid polypeptide reads, in one-letter code: Protein-export protein SecB (160 aa).

This sequence belongs to the SecB family. As to quaternary structure, homotetramer, a dimer of dimers. One homotetramer interacts with 1 SecA dimer.

Its subcellular location is the cytoplasm. Its function is as follows. One of the proteins required for the normal export of preproteins out of the cell cytoplasm. It is a molecular chaperone that binds to a subset of precursor proteins, maintaining them in a translocation-competent state. It also specifically binds to its receptor SecA. In Nitrosomonas eutropha (strain DSM 101675 / C91 / Nm57), this protein is Protein-export protein SecB.